Reading from the N-terminus, the 651-residue chain is Coronin-like protein (651 aa).

4 WD repeats span residues 79-110, 138-169, 180-210, and 226-257; these read GHTA…GIWD, GHAR…KLWN, KHPD…RVWN, and AKNQ…GIWD. The segment at 408 to 609 is disordered; the sequence is APSFHEAKRP…TSPKSLGLKK (202 aa). Residues 427 to 451 show a composition bias toward basic and acidic residues; the sequence is LEEKKEQPKVEKPISESEKEVKQEA. A phosphoserine mark is found at Ser-441, Ser-454, and Ser-456. Over residues 452-465 the composition is skewed to low complexity; that stretch reads PKSPSPLKSASSSS. A phosphothreonine mark is found at Thr-517 and Thr-529. 2 stretches are compositionally biased toward basic and acidic residues: residues 523–540 and 547–572; these read ETKK…ELKP and TDRK…EQEK. Ser-573 and Ser-579 each carry phosphoserine. The span at 578–590 shows a compositional bias: low complexity; sequence SSITAAKTAITAS. Residues 618 to 650 adopt a coiled-coil conformation; sequence VLQLEDVVDKLTKANLDKDERLLKLEQKIGELS.

The protein belongs to the WD repeat coronin family. As to quaternary structure, binds to F-actin.

The protein is Coronin-like protein (CRN1) of Saccharomyces cerevisiae (strain ATCC 204508 / S288c) (Baker's yeast).